The sequence spans 924 residues: Periplasmic nitrate reductase (924 aa).

A signal peptide (tat-type signal) is located at residues 1–30; sequence MNRRDFIKNTAIASAASVAGLSVPSSMLGA. Residues 35–91 enclose the 4Fe-4S Mo/W bis-MGD-type domain; it reads WKWDKAVCRFCGTGCGIMIARKDGKIVATKGDPAAPVNRGLNCIKGYFNAKIMYGED. [4Fe-4S] cluster-binding residues include C42, C45, C49, and C77. Mo-bis(molybdopterin guanine dinucleotide)-binding positions include K79, Q147, N172, C176, 209-216, M417, Q421, N527, 552-553, K575, D602, and 814-823; these read WGANMAEM, SD, and TGRVLEHWHS. Substrate is bound at residue W890. Mo-bis(molybdopterin guanine dinucleotide) is bound by residues N898 and K915.

It belongs to the prokaryotic molybdopterin-containing oxidoreductase family. NasA/NapA/NarB subfamily. Component of the periplasmic nitrate reductase NapAB complex composed of NapA and NapB. [4Fe-4S] cluster serves as cofactor. Requires Mo-bis(molybdopterin guanine dinucleotide) as cofactor. Post-translationally, predicted to be exported by the Tat system. The position of the signal peptide cleavage has not been experimentally proven.

It localises to the periplasm. The catalysed reaction is 2 Fe(II)-[cytochrome] + nitrate + 2 H(+) = 2 Fe(III)-[cytochrome] + nitrite + H2O. In terms of biological role, catalytic subunit of the periplasmic nitrate reductase complex NapAB. Receives electrons from NapB and catalyzes the reduction of nitrate to nitrite. In Campylobacter jejuni subsp. jejuni serotype O:2 (strain ATCC 700819 / NCTC 11168), this protein is Periplasmic nitrate reductase.